A 439-amino-acid chain; its full sequence is Chaperone SurA (439 aa).

The N-terminal stretch at 1 to 27 (MRRISSRLSLVLFAALSCATALFPAHA) is a signal peptide. PpiC domains lie at 180-281 (GEEF…KLLD) and 293-391 (LEQT…QVEA).

It localises to the periplasm. The catalysed reaction is [protein]-peptidylproline (omega=180) = [protein]-peptidylproline (omega=0). Its function is as follows. Chaperone involved in the correct folding and assembly of outer membrane proteins. Recognizes specific patterns of aromatic residues and the orientation of their side chains, which are found more frequently in integral outer membrane proteins. May act in both early periplasmic and late outer membrane-associated steps of protein maturation. This chain is Chaperone SurA, found in Aromatoleum aromaticum (strain DSM 19018 / LMG 30748 / EbN1) (Azoarcus sp. (strain EbN1)).